The following is a 371-amino-acid chain: MRRPMTLFKRISSPALLALALFGGAAHAALVPPQGYYQGIEKLKTGDGNFRCEAAPQPYTGPLQFRSKYEGSDKARATLNAASEKAFRKSTEDITTLEKGVSKMVGQYMRDGRPAQLDCTLTWLGTWARAGALLSTDYNHTGKSMRKWALGSMSGSWLRLKFSNSQPLAAHQAEADLIEKWLTRLAEQTVRDWSDLPLEKINNHSYWAAWSVMATAVATDRRDLFDWAVKEYKVGANQVDDQGFLPNEIKRQQRALAYHNYALPPLAMIASFAQANGVDLRAENNFALQRLGEGVLAGARDPSHFKARAGKKQDMTDLKVDSKYSWLEPWCALYHCVGDTLERKHDMQPFNSFRLGGDVTRVYDPSAESKK.

Residues 1 to 28 (MRRPMTLFKRISSPALLALALFGGAAHA) form the signal peptide. Substrate-binding positions include 67 to 68 (SK), 140 to 141 (HT), and Tyr258.

The protein belongs to the polysaccharide lyase 5 family.

The protein resides in the periplasm. It catalyses the reaction Eliminative cleavage of alginate to give oligosaccharides with 4-deoxy-alpha-L-erythro-hex-4-enuronosyl groups at their non-reducing ends and beta-D-mannuronate at their reducing end.. In terms of biological role, catalyzes the depolymerization of alginate by cleaving the beta-1,4 glycosidic bond between two adjacent sugar residues via a beta-elimination mechanism. May serve to degrade mislocalized alginate that is trapped in the periplasmic space. This is Alginate lyase from Pseudomonas putida (strain ATCC 47054 / DSM 6125 / CFBP 8728 / NCIMB 11950 / KT2440).